A 767-amino-acid chain; its full sequence is AMP deaminase 3 (767 aa).

Phosphoserine is present on residues serine 85 and serine 107. 2 disordered regions span residues 89–111 and 181–205; these read QMPP…PTTP and LGHP…PLPQ. 2 residues coordinate Zn(2+): histidine 317 and histidine 319. Residues histidine 319 and 388–393 each bind substrate; that span reads KFNSKY. Histidine 586 provides a ligand contact to Zn(2+). A substrate-binding site is contributed by glutamate 589. The active-site Proton acceptor is histidine 608. Aspartate 663 lines the Zn(2+) pocket. Residue 664–667 coordinates substrate; that stretch reads DPMQ.

It belongs to the metallo-dependent hydrolases superfamily. Adenosine and AMP deaminases family. In terms of assembly, homotetramer. Zn(2+) serves as cofactor.

It catalyses the reaction AMP + H2O + H(+) = IMP + NH4(+). It functions in the pathway purine metabolism; IMP biosynthesis via salvage pathway; IMP from AMP: step 1/1. In terms of biological role, AMP deaminase plays a critical role in energy metabolism. The polypeptide is AMP deaminase 3 (Homo sapiens (Human)).